The sequence spans 198 residues: ATP-dependent Clp protease proteolytic subunit (198 aa).

Ser-98 functions as the Nucleophile in the catalytic mechanism. His-123 is a catalytic residue.

It belongs to the peptidase S14 family. As to quaternary structure, fourteen ClpP subunits assemble into 2 heptameric rings which stack back to back to give a disk-like structure with a central cavity, resembling the structure of eukaryotic proteasomes.

It localises to the cytoplasm. It catalyses the reaction Hydrolysis of proteins to small peptides in the presence of ATP and magnesium. alpha-casein is the usual test substrate. In the absence of ATP, only oligopeptides shorter than five residues are hydrolyzed (such as succinyl-Leu-Tyr-|-NHMec, and Leu-Tyr-Leu-|-Tyr-Trp, in which cleavage of the -Tyr-|-Leu- and -Tyr-|-Trp bonds also occurs).. Functionally, cleaves peptides in various proteins in a process that requires ATP hydrolysis. Has a chymotrypsin-like activity. Plays a major role in the degradation of misfolded proteins. The protein is ATP-dependent Clp protease proteolytic subunit of Bacillus pumilus (strain SAFR-032).